We begin with the raw amino-acid sequence, 446 residues long: Methionine aminopeptidase 2-1 (446 aa).

Positions 1–88 are disordered; the sequence is MAAQVTPELA…PPRVILSSIF (88 aa). The segment covering 32 to 44 has biased composition (acidic residues); the sequence is ENEDVESDDDNEG. Positions 57–72 are enriched in basic residues; the sequence is AKKKKKKKPKKKKKGG. Residue H196 coordinates substrate. Residues D216, D227, and H296 each contribute to the a divalent metal cation site. H304 contacts substrate. 2 residues coordinate a divalent metal cation: E332 and E427.

It belongs to the peptidase M24A family. Methionine aminopeptidase eukaryotic type 2 subfamily. Requires Co(2+) as cofactor. Zn(2+) is required as a cofactor. The cofactor is Mn(2+). Fe(2+) serves as cofactor.

It is found in the cytoplasm. It carries out the reaction Release of N-terminal amino acids, preferentially methionine, from peptides and arylamides.. In terms of biological role, cotranslationally removes the N-terminal methionine from nascent proteins. The N-terminal methionine is often cleaved when the second residue in the primary sequence is small and uncharged (Met-Ala-, Cys, Gly, Pro, Ser, Thr, or Val). This is Methionine aminopeptidase 2-1 from Blastomyces gilchristii (strain SLH14081) (Blastomyces dermatitidis).